Here is a 201-residue protein sequence, read N- to C-terminus: MNPEYDYLFKLLLIGDSGVGKSCLLLRFADDTYTESYISTIGVDFKIRTIELDGKTIKLQIWDTAGQERFRTITSSYYRGAHGIIVVYDVTDQESYANVKQWLQEIDRYASENVNKLLVGNKSDLTTKKVVDNTTAKEFADSLGIPFLETSAKNATNVEQAFMTMAAEIKKRMGPGAASGGERPNLKIDSTPVKQAGGGCC.

Residue methionine 1 is modified to N-acetylmethionine. 13 residues coordinate GTP: serine 17, glycine 18, valine 19, glycine 20, lysine 21, serine 22, cysteine 23, tyrosine 33, threonine 34, glutamate 35, serine 36, serine 39, and threonine 40. Residue serine 22 participates in Mg(2+) binding. The Switch 1 signature appears at 30–45 (DDTYTESYISTIGVDF). Residues threonine 40 and aspartate 63 each contribute to the Mg(2+) site. A switch 2 region; Required for interaction with REP1/CHM region spans residues 64-83 (TAGQERFRTITSSYYRGAHG). Positions 65–80 (AGQERFRTITSSYYRG) match the Switch 2 motif. GTP contacts are provided by glycine 66, asparagine 121, lysine 122, aspartate 124, serine 151, alanine 152, and lysine 153. Positions 173–201 (MGPGAASGGERPNLKIDSTPVKQAGGGCC) are disordered. S-geranylgeranyl cysteine attachment occurs at residues cysteine 200 and cysteine 201. A Cysteine methyl ester modification is found at cysteine 201.

This sequence belongs to the small GTPase superfamily. Rab family. In terms of assembly, interacts with MICAL1 and MICAL2. Interacts (in GTP-bound form) with MICALCL, MICAL1 and MILCAL3. Interacts with GDI1; the interaction requires the GDP-bound state. Interacts with CHM/REP1; the interaction requires the GDP-bound form and is necessary for prenylation by GGTase II. Interacts with RabGAP TBC1D20. Interacts (in GDP-bound form) with lipid phosphatase MTMR6 (via GRAM domain); the interaction regulates MTMR6 recruitment to the endoplasmic reticulum-Golgi intermediate compartment. Interacts (in GDP-bound form) with lipid phosphatase MTMR7. Requires Mg(2+) as cofactor. In terms of processing, prenylated; by GGTase II, only after interaction of the substrate with Rab escort protein 1 (REP1).

It is found in the cytoplasm. Its subcellular location is the membrane. The protein resides in the preautophagosomal structure membrane. The protein localises to the perinuclear region. The enzyme catalyses GTP + H2O = GDP + phosphate + H(+). With respect to regulation, regulated by guanine nucleotide exchange factors (GEFs) which promote the exchange of bound GDP for free GTP. Regulated by GTPase activating proteins (GAPs) including TBC1D20 which increases the GTP hydrolysis activity. Inhibited by GDP dissociation inhibitors (GDIs). In terms of biological role, the small GTPases Rab are key regulators of intracellular membrane trafficking, from the formation of transport vesicles to their fusion with membranes. Rabs cycle between an inactive GDP-bound form and an active GTP-bound form that is able to recruit to membranes different set of downstream effectors directly responsible for vesicle formation, movement, tethering and fusion. Plays a role in the initial events of the autophagic vacuole development which take place at specialized regions of the endoplasmic reticulum. Regulates vesicular transport between the endoplasmic reticulum and successive Golgi compartments. Required to modulate the compacted morphology of the Golgi. Promotes the recruitment of lipid phosphatase MTMR6 to the endoplasmic reticulum-Golgi intermediate compartment. The protein is Ras-related protein Rab-1B (RAB1B) of Bos taurus (Bovine).